Here is a 46-residue protein sequence, read N- to C-terminus: Photosystem II reaction center protein K (46 aa).

Residues 1–9 (MSTLPILLA) constitute a propeptide that is removed on maturation. A helical membrane pass occupies residues 25 to 45 (LPSIPVLFLLLAFVWQAAVSF).

Belongs to the PsbK family. In terms of assembly, PSII is composed of 1 copy each of membrane proteins PsbA, PsbB, PsbC, PsbD, PsbE, PsbF, PsbH, PsbI, PsbJ, PsbK, PsbL, PsbM, PsbT, PsbX, PsbY, PsbZ, Psb30/Ycf12, at least 3 peripheral proteins of the oxygen-evolving complex and a large number of cofactors. It forms dimeric complexes.

The protein resides in the plastid. The protein localises to the chloroplast thylakoid membrane. In terms of biological role, one of the components of the core complex of photosystem II (PSII). PSII is a light-driven water:plastoquinone oxidoreductase that uses light energy to abstract electrons from H(2)O, generating O(2) and a proton gradient subsequently used for ATP formation. It consists of a core antenna complex that captures photons, and an electron transfer chain that converts photonic excitation into a charge separation. The protein is Photosystem II reaction center protein K of Nephroselmis olivacea (Green alga).